Consider the following 607-residue polypeptide: Methylmalonate-semialdehyde dehydrogenase [acylating], mitochondrial (607 aa).

Residues Met1–Thr69 form a disordered region. The N-terminal 98 residues, Met1 to Leu98, are a transit peptide targeting the mitochondrion. The segment covering Leu9–Ala30 has biased composition (polar residues). A compositionally biased stretch (basic residues) spans Leu42–Leu51. The NAD(+) site is built by Phe259, Lys283, Glu286, Lys287, and Ser336. The active-site Nucleophile is the Cys391. Residue Glu491 coordinates NAD(+).

This sequence belongs to the aldehyde dehydrogenase family.

It localises to the mitochondrion. The catalysed reaction is 2-methyl-3-oxopropanoate + NAD(+) + CoA + H2O = propanoyl-CoA + hydrogencarbonate + NADH + H(+). The sequence is that of Methylmalonate-semialdehyde dehydrogenase [acylating], mitochondrial (ALDH6B2) from Arabidopsis thaliana (Mouse-ear cress).